Reading from the N-terminus, the 211-residue chain is Protein-methionine-sulfoxide reductase heme-binding subunit MsrQ (211 aa).

The next 5 helical transmembrane spans lie at 10 to 30 (WLKVCLHLAGLLPFLWLVWAI), 82 to 102 (LWCFAWATLHLTSYALLELGV), 116 to 136 (PYLTLGIISWVILLALAFTST), 153 to 173 (FVYLVAILAPIHYLWSVKIIS), and 178 to 198 (IYAGLAVLLLALRYKKLLSLF).

This sequence belongs to the MsrQ family. Heterodimer of a catalytic subunit (MsrP) and a heme-binding subunit (MsrQ). FMN serves as cofactor. It depends on heme b as a cofactor.

It localises to the cell inner membrane. Its function is as follows. Part of the MsrPQ system that repairs oxidized periplasmic proteins containing methionine sulfoxide residues (Met-O), using respiratory chain electrons. Thus protects these proteins from oxidative-stress damage caused by reactive species of oxygen and chlorine generated by the host defense mechanisms. MsrPQ is essential for the maintenance of envelope integrity under bleach stress, rescuing a wide series of structurally unrelated periplasmic proteins from methionine oxidation, including the primary periplasmic chaperone SurA and the lipoprotein Pal. MsrQ provides electrons for reduction to the reductase catalytic subunit MsrP, using the quinone pool of the respiratory chain. The polypeptide is Protein-methionine-sulfoxide reductase heme-binding subunit MsrQ (Escherichia coli (strain 55989 / EAEC)).